We begin with the raw amino-acid sequence, 285 residues long: GPN-loop GTPase 3 (285 aa).

13 to 18 (GSGKST) lines the GTP pocket. The short motif at 70 to 72 (GPN) is the Gly-Pro-Asn (GPN)-loop; involved in dimer interface element. 172–175 (TKID) is a GTP binding site. The interval 253 to 276 (GEDLEPKEPPLENDDDDDDDEGDE) is disordered. Over residues 263–275 (LENDDDDDDDEGD) the composition is skewed to acidic residues.

This sequence belongs to the GPN-loop GTPase family. Heterodimer with gpn1. Binds to RNA polymerase II (RNAPII).

In terms of biological role, small GTPase required for proper localization of RNA polymerase II (RNAPII). May act at an RNAP assembly step prior to nuclear import. This chain is GPN-loop GTPase 3 (gpn3), found in Dictyostelium discoideum (Social amoeba).